The primary structure comprises 570 residues: Putative ABC transporter ATP-binding protein SAV2684 (570 aa).

ABC transporter domains follow at residues 6-247 (ISFK…GIRE) and 304-537 (LELN…ASLR). Residues 40 to 47 (GASGSGKS) and 338 to 345 (GHNGAGKS) contribute to the ATP site.

The protein belongs to the ABC transporter superfamily.

The protein localises to the cell membrane. In terms of biological role, probably part of an ABC transporter complex. Responsible for energy coupling to the transport system. In Staphylococcus aureus (strain Mu50 / ATCC 700699), this protein is Putative ABC transporter ATP-binding protein SAV2684.